The chain runs to 556 residues: Urocanate hydratase (556 aa).

NAD(+)-binding positions include 52 to 53, glutamine 130, 176 to 178, glutamate 196, arginine 201, 242 to 243, 263 to 267, 273 to 274, and tyrosine 322; these read GG, GMG, NA, QTSAH, and YL. Cysteine 410 is a catalytic residue. Glycine 492 is a binding site for NAD(+).

The protein belongs to the urocanase family. NAD(+) serves as cofactor.

Its subcellular location is the cytoplasm. It catalyses the reaction 4-imidazolone-5-propanoate = trans-urocanate + H2O. Its pathway is amino-acid degradation; L-histidine degradation into L-glutamate; N-formimidoyl-L-glutamate from L-histidine: step 2/3. Catalyzes the conversion of urocanate to 4-imidazolone-5-propionate. The sequence is that of Urocanate hydratase from Shewanella frigidimarina (strain NCIMB 400).